The following is a 186-amino-acid chain: Ribosome-recycling factor (186 aa).

Residues 140–163 (LKKAEKDGDIGQDEGRSLSERVQK) form a disordered region.

The protein belongs to the RRF family.

The protein resides in the cytoplasm. In terms of biological role, responsible for the release of ribosomes from messenger RNA at the termination of protein biosynthesis. May increase the efficiency of translation by recycling ribosomes from one round of translation to another. This chain is Ribosome-recycling factor, found in Rhizobium rhizogenes (strain K84 / ATCC BAA-868) (Agrobacterium radiobacter).